We begin with the raw amino-acid sequence, 298 residues long: Specificity protein transcription factor 1 (298 aa).

The segment covering 206-218 (VSSGSESVSARGT) has biased composition (low complexity). The tract at residues 206–233 (VSSGSESVSARGTSGSGGTGKYPSSRTA) is disordered. Residues 260 to 284 (HNCHIAGCGKVYNKSSHLKAHLRWH) form a C2H2-type zinc finger.

Belongs to the Sp1 C2H2-type zinc-finger protein family. As to expression, expressed in ASJ sensory neurons, pharyngeal cells, rectal cells, intestine, seam cells, and vulval cells.

In terms of biological role, probable transcription factor which modulates gene expression, thereby acting as an ASJ sensory neuron terminal selector gene. This is Specificity protein transcription factor 1 from Caenorhabditis elegans.